The chain runs to 254 residues: MASKALSSFTAKPAVSLLPHGVSSSASPSVMSLSFSRHTGGRGVVAASSTVDTNNMPMTGVVFQPFEEVKKADLAIPITSNASLARQRYADSSEAAINEQINVEYNVSYVYHSMYAYFDRDNVALKGLAKFFKESSDEEREHAEKFMEYQNQRGGRVTLHPIVSPISDFEHAEKGDALYAMELALSLEKLTNEKLLNLHRVASENNDPQLADFVESEFLGEQIEAIKKISDFITQLRMVGKGHGVWHFDQMLLN.

The N-terminal 47 residues, 1–47 (MASKALSSFTAKPAVSLLPHGVSSSASPSVMSLSFSRHTGGRGVVAA), are a transit peptide targeting the chloroplast. The segment at 48 to 86 (SSTVDTNNMPMTGVVFQPFEEVKKADLAIPITSNASLAR) is extension peptide (EP). One can recognise a Ferritin-like diiron domain in the interval 87–240 (QRYADSSEAA…DFITQLRMVG (154 aa)). Residues Glu104, Glu139, His142, Glu188, and Gln222 each contribute to the Fe cation site.

Belongs to the ferritin family. As to quaternary structure, oligomer of 24 subunits. There are two types of subunits: L (light) chain and H (heavy) chain. The major chain can be light or heavy, depending on the species and tissue type. The functional molecule forms a roughly spherical shell with a diameter of 12 nm and contains a central cavity into which the insoluble mineral iron core is deposited.

The protein localises to the plastid. Its subcellular location is the chloroplast. It catalyses the reaction 4 Fe(2+) + O2 + 4 H(+) = 4 Fe(3+) + 2 H2O. Stores iron in a soluble, non-toxic, readily available form. Important for iron homeostasis. Has ferroxidase activity. Iron is taken up in the ferrous form and deposited as ferric hydroxides after oxidation. This is Ferritin-1, chloroplastic (LSC30) from Brassica napus (Rape).